The sequence spans 157 residues: Crossover junction endodeoxyribonuclease RuvC (157 aa).

Active-site residues include D7, E67, and D140. D7, E67, and D140 together coordinate Mg(2+).

The protein belongs to the RuvC family. As to quaternary structure, homodimer which binds Holliday junction (HJ) DNA. The HJ becomes 2-fold symmetrical on binding to RuvC with unstacked arms; it has a different conformation from HJ DNA in complex with RuvA. In the full resolvosome a probable DNA-RuvA(4)-RuvB(12)-RuvC(2) complex forms which resolves the HJ. Mg(2+) serves as cofactor.

Its subcellular location is the cytoplasm. It catalyses the reaction Endonucleolytic cleavage at a junction such as a reciprocal single-stranded crossover between two homologous DNA duplexes (Holliday junction).. The RuvA-RuvB-RuvC complex processes Holliday junction (HJ) DNA during genetic recombination and DNA repair. Endonuclease that resolves HJ intermediates. Cleaves cruciform DNA by making single-stranded nicks across the HJ at symmetrical positions within the homologous arms, yielding a 5'-phosphate and a 3'-hydroxyl group; requires a central core of homology in the junction. The consensus cleavage sequence is 5'-(A/T)TT(C/G)-3'. Cleavage occurs on the 3'-side of the TT dinucleotide at the point of strand exchange. HJ branch migration catalyzed by RuvA-RuvB allows RuvC to scan DNA until it finds its consensus sequence, where it cleaves and resolves the cruciform DNA. This Rickettsia conorii (strain ATCC VR-613 / Malish 7) protein is Crossover junction endodeoxyribonuclease RuvC.